The primary structure comprises 148 residues: MAHPHQHLLTLFLTDDNGFYSYLSEKSDDEALEDINTIKKYMDFILSVLIRSKEKLENIGCSYEPMSESFKALIKVKDDGTLVKAFTKPLLNPHSEKIVLDRGYTSDFAISVIRLSSKSSYILPANTKYINPNENMYINNLISLLKRN.

This sequence belongs to the chordopoxvirinae J1 family. In terms of assembly, homodimer. Part of a complex composed of A30, G7, F10 kinase, A15, D2, D3, and J1. Interacts with A45.

Its subcellular location is the virion. The protein resides in the host cytoplasm. Its function is as follows. Late protein which is a part of a large complex required for early virion morphogenesis. This complex participates in the formation of virosomes and the incorporation of virosomal contents into nascent immature virions. J1 protein is required for DNA packaging during immature virions (IV) formation. The sequence is that of Protein J1 homolog from Fowlpox virus (strain NVSL) (FPV).